Here is a 246-residue protein sequence, read N- to C-terminus: 7-cyano-7-deazaguanine synthase (246 aa).

Residue 24–34 (FSGGLDSTTVL) coordinates ATP. The Zn(2+) site is built by Cys209, Cys219, Cys222, and Cys225.

The protein belongs to the QueC family. Requires Zn(2+) as cofactor.

The enzyme catalyses 7-carboxy-7-deazaguanine + NH4(+) + ATP = 7-cyano-7-deazaguanine + ADP + phosphate + H2O + H(+). The protein operates within purine metabolism; 7-cyano-7-deazaguanine biosynthesis. Its function is as follows. Catalyzes the ATP-dependent conversion of 7-carboxy-7-deazaguanine (CDG) to 7-cyano-7-deazaguanine (preQ(0)). This Polynucleobacter asymbioticus (strain DSM 18221 / CIP 109841 / QLW-P1DMWA-1) (Polynucleobacter necessarius subsp. asymbioticus) protein is 7-cyano-7-deazaguanine synthase.